An 89-amino-acid polypeptide reads, in one-letter code: MMNDNNERKPLRTIKGRVISNKMQKTVTVLVERQIKHALYGKYIKRSTKIHAHDADDLCNEGDVVLMTEVAPISKTKNWRVVEIVARSD.

It belongs to the universal ribosomal protein uS17 family. In terms of assembly, part of the 30S ribosomal subunit.

Functionally, one of the primary rRNA binding proteins, it binds specifically to the 5'-end of 16S ribosomal RNA. This chain is Small ribosomal subunit protein uS17, found in Xylella fastidiosa (strain M12).